A 384-amino-acid polypeptide reads, in one-letter code: MGTAPNKRVMIVAGEASGDLHGSNLVKEALRLDPTLSFFGIGGPHMRAAGVETVVDSSEMAVVGLVEVLAHFGVIYKAYATLKRLITTNPPDLLILIDYPDFNMLVAKVAKRAGVKVLYYISPQVWAWRTGRVKKIARLVDRMAVVFPFEVPFYEKAGVPVSFVGHPLADRVSPSMSRSEALAAFGLDPSRRVVGLFPGSRRGEIARLFPVILESAKLLRDRYPGIQFILPLASSLTDADIAPHLAASGLEVVVARDKVYDVMQVCDAIATVSGTVTLEIALMGVPMVIIYTVSPLTYEVGKRLIRVDHIGICNIVAGERVVPELIQDEATAERIAAEIGRYLDDPVHTEKTRAGLARVREKLGSGGCSERVAGIVLEMLGKKR.

Belongs to the LpxB family.

The enzyme catalyses a lipid X + a UDP-2-N,3-O-bis[(3R)-3-hydroxyacyl]-alpha-D-glucosamine = a lipid A disaccharide + UDP + H(+). The protein operates within bacterial outer membrane biogenesis; LPS lipid A biosynthesis. In terms of biological role, condensation of UDP-2,3-diacylglucosamine and 2,3-diacylglucosamine-1-phosphate to form lipid A disaccharide, a precursor of lipid A, a phosphorylated glycolipid that anchors the lipopolysaccharide to the outer membrane of the cell. The polypeptide is Lipid-A-disaccharide synthase (Geobacter metallireducens (strain ATCC 53774 / DSM 7210 / GS-15)).